A 160-amino-acid chain; its full sequence is Sulfur-rich protein (160 aa).

2 helical membrane passes run 63–83 (ITMI…TFVL) and 92–112 (FLFL…SVFM).

The protein localises to the membrane. The chain is Sulfur-rich protein (srp) from Chlamydia abortus (strain DSM 27085 / S26/3) (Chlamydophila abortus).